A 552-amino-acid polypeptide reads, in one-letter code: E3 ubiquitin-protein ligase MGRN1 (552 aa).

Gly2 carries N-myristoyl glycine lipidation. The segment at 278–317 (CVVCLSDLRDTLILPCRHLCLCTSCADTLRYQANNCPICR) adopts an RING-type zinc-finger fold. The segment at 355-384 (SCPFKKSKPHPASLASKKPKRETNSDSVPP) is disordered. Positions 406-409 (PSAP) match the Required for TSG101-binding motif. The residue at position 411 (Tyr411) is a Phosphotyrosine. Residues 439–552 (SSRQKGRPQS…PDSCSVGIDE (114 aa)) form a disordered region. The segment covering 450-460 (APDSTLRSPSS) has biased composition (polar residues). Over residues 464 to 475 (EEDEEKLSEDVD) the composition is skewed to acidic residues. At Ser471 the chain carries Phosphoserine. Residues 504–523 (SSSPQQGTRAASIENVLQDS) show a composition bias toward polar residues. Residue Ser524 is modified to Phosphoserine.

Interacts with MC1R and MC4R, but not with TBXA2R. Interacts with TSG101. Interacts with mislocalized cytosolically exposed PRNP; this interaction alters MGRN1 subcellular location and causes lysosomal enlargement. Autoubiquitinated in vitro.

The protein localises to the early endosome. The protein resides in the cytoplasm. Its subcellular location is the cytosol. It is found in the nucleus. It localises to the cell membrane. It catalyses the reaction S-ubiquitinyl-[E2 ubiquitin-conjugating enzyme]-L-cysteine + [acceptor protein]-L-lysine = [E2 ubiquitin-conjugating enzyme]-L-cysteine + N(6)-ubiquitinyl-[acceptor protein]-L-lysine.. It participates in protein modification; protein ubiquitination. E3 ubiquitin-protein ligase. Mediates monoubiquitination at multiple sites of TSG101 in the presence of UBE2D1, but not of UBE2G1, nor UBE2H. Plays a role in the regulation of endosome-to-lysosome trafficking. Impairs MC1R- and MC4R-signaling by competing with GNAS-binding to MCRs and inhibiting agonist-induced cAMP production. Does not inhibit ADRB2-signaling. Does not promote MC1R ubiquitination. Acts also as a negative regulator of hedgehog signaling. This chain is E3 ubiquitin-protein ligase MGRN1 (MGRN1), found in Homo sapiens (Human).